A 500-amino-acid polypeptide reads, in one-letter code: Probable lipoprotein aminopeptidase LpqL (500 aa).

A signal peptide spans 1–24 (MVNKSRMMPAVLAVAVVVAFLTTG). C25 is lipidated: N-palmitoyl cysteine. Residue C25 is the site of S-diacylglycerol cysteine attachment. The 92-residue stretch at 140–231 (VTGPLVAAPA…VTKSVGFQLR (92 aa)) folds into the PA domain. 2 residues coordinate Zn(2+): H271 and D283. The Proton acceptor role is filled by E316. 3 residues coordinate Zn(2+): E317, D345, and H448.

The protein belongs to the peptidase M28 family. M28A subfamily. Requires Zn(2+) as cofactor. Modified by Lgt on Cys-25 with an S-linked diacylglycerol with a mixture of C16 and C19 fatty acids (palmitic and tuberculostearic acid), signal peptide is removed by LspA, modified by Lnt with an amide-linked mixture of C16 and C19 fatty acids, expressed in M.bovis.

The protein localises to the cell membrane. It carries out the reaction Release of an N-terminal amino acid, Xaa-|-Yaa-, in which Xaa is preferably Leu, but may be other amino acids including Pro although not Arg or Lys, and Yaa may be Pro. Amino acid amides and methyl esters are also readily hydrolyzed, but rates on arylamides are exceedingly low.. Functionally, an aminopeptidase; acts on free N-terminal amino groups with a very strong preference for Leu in the first position. This is Probable lipoprotein aminopeptidase LpqL (lpqL) from Mycobacterium tuberculosis (strain ATCC 25618 / H37Rv).